The chain runs to 29 residues: Cyclotide psyleio D (29 aa).

The segment at residues 1–29 is a cross-link (cyclopeptide (Gly-Asp)); the sequence is GLPVCGESCFGGTCNTPGCSCTWPVCTRD. 3 disulfide bridges follow: cysteine 5/cysteine 19, cysteine 9/cysteine 21, and cysteine 14/cysteine 26.

In terms of processing, this is a cyclic peptide.

In terms of biological role, probably participates in a plant defense mechanism. In Psychotria brachyceras, this protein is Cyclotide psyleio D.